A 60-amino-acid chain; its full sequence is Large ribosomal subunit protein bL33 (60 aa).

The protein belongs to the bacterial ribosomal protein bL33 family.

The chain is Large ribosomal subunit protein bL33 from Chlorobium phaeobacteroides (strain DSM 266 / SMG 266 / 2430).